The primary structure comprises 319 residues: F-box only protein 8 (319 aa).

An F-box domain is found at 68–111 (FINLEMLPPELSFTILSYLNATDLCLASCVWQDLANDELLWQGL). In terms of domain architecture, SEC7 spans 146-276 (FNANPEEGVS…LILLSIDLTS (131 aa)).

In terms of tissue distribution, high expression in brain, heart, kidney, liver, lung, skeletal muscle, testis, and day-7 embryos.

In terms of biological role, may promote guanine-nucleotide exchange on an ARF. Promotes the activation of ARF through replacement of GDP with GTP (Potential). In Mus musculus (Mouse), this protein is F-box only protein 8 (Fbxo8).